A 416-amino-acid chain; its full sequence is Lipid III flippase (416 aa).

At 1-17 (MSLAKASLWTAASTLVK) the chain is on the cytoplasmic side. The helical transmembrane segment at 18–38 (IGAGLLVGKLLAVSFGPAGLG) threads the bilayer. Residues 39 to 45 (LAANFRQ) lie on the Periplasmic side of the membrane. Residues 46 to 66 (LITVLGVLAGAGIFNGVTKYV) traverse the membrane as a helical segment. At 67 to 84 (AQYHDNPQQLRRVVGTSS) the chain is on the cytoplasmic side. The helical transmembrane segment at 85-105 (AMVLGFSTLMALVFVLAAAPI) threads the bilayer. The Periplasmic segment spans residues 106–121 (SQGLFGNTDYQGLVRL). Residues 122–142 (VALVQMGIAWGNLLLALMKGF) form a helical membrane-spanning segment. At 143–144 (RD) the chain is on the cytoplasmic side. Residues 145 to 165 (AAGNALSLIVGSLIGVLAYYV) traverse the membrane as a helical segment. The Periplasmic portion of the chain corresponds to 166-174 (SYRLGGYEG). The helical transmembrane segment at 175–195 (ALLGLALIPALVVIPAAIMLI) threads the bilayer. Over 196-216 (KRGVIPLSYLKPSWDNGLAGQ) the chain is Cytoplasmic. The chain crosses the membrane as a helical span at residues 217-237 (LSKFTLMALITSVTLPVAYIM). Over 238 to 259 (MRKLLAAQYSWDEVGIWQGVSS) the chain is Periplasmic. A helical transmembrane segment spans residues 260–280 (ISDAYLQFITASFSVYLLPTL). Topologically, residues 281–302 (SRLTEKRDITREVVKSLKFVLP) are cytoplasmic. A helical transmembrane segment spans residues 303–323 (AVAAASFTVWLLRDFAIWLLL). Residues 324–334 (SNKFTAMRDLF) are Periplasmic-facing. The helical transmembrane segment at 335-355 (AWQLVGDVLKVGAYVFGYLVI) threads the bilayer. At 356–370 (AKASLRFYILAEVSQ) the chain is on the cytoplasmic side. The next 2 helical transmembrane spans lie at 371-391 (FTLL…LGAA) and 392-412 (QAYM…FLLW). Residues 413 to 416 (RRRA) lie on the Cytoplasmic side of the membrane.

The protein belongs to the polysaccharide transport (PST) (TC 2.A.66.2) family. In terms of assembly, probably part of a complex composed of WzxE, WzyE and WzzE.

It localises to the cell inner membrane. It functions in the pathway bacterial outer membrane biogenesis; enterobacterial common antigen biosynthesis. Its function is as follows. Mediates the transbilayer movement of Und-PP-GlcNAc-ManNAcA-Fuc4NAc (lipid III) from the inner to the outer leaflet of the cytoplasmic membrane during the assembly of enterobacterial common antigen (ECA). Required for the assembly of the phosphoglyceride-linked form of ECA (ECA(PG)) and the water-soluble cyclic form of ECA (ECA(CYC)). Could also mediate the translocation of Und-PP-GlcNAc. This chain is Lipid III flippase, found in Escherichia coli (strain K12).